Consider the following 451-residue polypeptide: Phosphoglucosamine mutase (451 aa).

Residue Ser-101 is the Phosphoserine intermediate of the active site. Residues Ser-101, Asp-241, Asp-243, and Asp-245 each coordinate Mg(2+). A Phosphoserine modification is found at Ser-101.

This sequence belongs to the phosphohexose mutase family. Requires Mg(2+) as cofactor. In terms of processing, activated by phosphorylation.

It catalyses the reaction alpha-D-glucosamine 1-phosphate = D-glucosamine 6-phosphate. Functionally, catalyzes the conversion of glucosamine-6-phosphate to glucosamine-1-phosphate. The protein is Phosphoglucosamine mutase of Exiguobacterium sibiricum (strain DSM 17290 / CCUG 55495 / CIP 109462 / JCM 13490 / 255-15).